The sequence spans 390 residues: Lipid-A-disaccharide synthase (390 aa).

This sequence belongs to the LpxB family.

The catalysed reaction is a lipid X + a UDP-2-N,3-O-bis[(3R)-3-hydroxyacyl]-alpha-D-glucosamine = a lipid A disaccharide + UDP + H(+). It functions in the pathway bacterial outer membrane biogenesis; LPS lipid A biosynthesis. Functionally, condensation of UDP-2,3-diacylglucosamine and 2,3-diacylglucosamine-1-phosphate to form lipid A disaccharide, a precursor of lipid A, a phosphorylated glycolipid that anchors the lipopolysaccharide to the outer membrane of the cell. The sequence is that of Lipid-A-disaccharide synthase from Haemophilus ducreyi (strain 35000HP / ATCC 700724).